A 159-amino-acid polypeptide reads, in one-letter code: Dynein 18 kDa light chain, flagellar outer arm (159 aa).

3 consecutive EF-hand domains span residues 18–53 (EEMD…LGQN), 54–89 (PTEE…NKQM), and 129–159 (ELTV…ALLS). Aspartate 31, aspartate 33, serine 35, threonine 37, glutamate 42, aspartate 67, aspartate 69, serine 71, cysteine 73, and glutamate 78 together coordinate Ca(2+).

As to quaternary structure, consists of at least 3 heavy chains (alpha, beta and gamma), 2 intermediate chains and 8 light chains.

The protein localises to the cell projection. Its subcellular location is the cilium. It localises to the flagellum. In terms of biological role, may be involved in the calcium-mediated regulation of dynein motor function. Binds 1 mole of calcium. In Chlamydomonas reinhardtii (Chlamydomonas smithii), this protein is Dynein 18 kDa light chain, flagellar outer arm.